The primary structure comprises 206 residues: LysM and putative peptidoglycan-binding domain-containing protein 2 (206 aa).

Positions 59–103 (IEHCLSPSDTLQGIALKYGVTMEQIKRANKLFSTDCIFLRKSLNI) constitute a LysM domain. Residues 184-206 (AQRLKEEDDLRHDGSYATCSYQH) form a disordered region. Basic and acidic residues predominate over residues 186 to 197 (RLKEEDDLRHDG).

In Xenopus laevis (African clawed frog), this protein is LysM and putative peptidoglycan-binding domain-containing protein 2 (lysmd2).